The sequence spans 236 residues: Small ribosomal subunit protein uS2c (236 aa).

It belongs to the universal ribosomal protein uS2 family.

It is found in the plastid. It localises to the chloroplast. The protein is Small ribosomal subunit protein uS2c (rps2) of Zea mays (Maize).